The sequence spans 196 residues: Lipoprotein signal peptidase (196 aa).

Residues 1–24 (MAEAERIIGMPENPDVDGTDEGGS) form a disordered region. The next 3 helical transmembrane spans lie at 40–60 (ILAL…SKML), 92–112 (IGEA…VVIF), and 118–138 (LYSL…LGNL). Active-site residues include D155 and D169. A helical transmembrane segment spans residues 164–184 (VFNLADSAIVCGGILIVILSF).

It belongs to the peptidase A8 family.

It localises to the cell membrane. The enzyme catalyses Release of signal peptides from bacterial membrane prolipoproteins. Hydrolyzes -Xaa-Yaa-Zaa-|-(S,diacylglyceryl)Cys-, in which Xaa is hydrophobic (preferably Leu), and Yaa (Ala or Ser) and Zaa (Gly or Ala) have small, neutral side chains.. The protein operates within protein modification; lipoprotein biosynthesis (signal peptide cleavage). Functionally, this protein specifically catalyzes the removal of signal peptides from prolipoproteins. In Streptomyces griseus subsp. griseus (strain JCM 4626 / CBS 651.72 / NBRC 13350 / KCC S-0626 / ISP 5235), this protein is Lipoprotein signal peptidase.